A 724-amino-acid chain; its full sequence is 1,3-beta-galactosyl-N-acetylhexosamine phosphorylase Cphy3030 (724 aa).

Asp316 (proton donor) is an active-site residue.

Belongs to the glycoside hydrolase 112 family.

It carries out the reaction beta-D-galactosyl-(1-&gt;3)-N-acetyl-D-glucosamine + phosphate = alpha-D-galactose 1-phosphate + N-acetyl-D-glucosamine. Functionally, reversibly phosphorolyzes beta-D-galactopyranosyl-(1-&gt;3)-N-acetyl-D-glucosamine to form alpha-D-galactopyranose 1-phosphate and acetyl-D-glucosamine. Active towards galacto-N-biose and lacto-N-biose. Does not phosphorolyze galacto-N-tetraose or lacto-N-tetraose. In the reverse reaction has activity toward N-acetyl-D-glucosamine and N-acetyl-D-galactosamine, but not L-rhamnose, D-glucose or D-galactose. The sequence is that of 1,3-beta-galactosyl-N-acetylhexosamine phosphorylase Cphy3030 from Lachnoclostridium phytofermentans (strain ATCC 700394 / DSM 18823 / ISDg) (Clostridium phytofermentans).